We begin with the raw amino-acid sequence, 482 residues long: MAQTQGTKRKVCYYYDGDVGNYYYGQGHPMKPHRIRMTHNLLLNYGLYRKMEIYRPHKANAEEMTKYHSDDYIKFLRSIRPDNMSEYSKQMQRFNVGEDCPVFDGLFEFCQLSTGGSVASAVKLNKQQTDIAVNWAGGLHHAKKSEASGFCYVNDIVLAILELLKYHQRVLYIDIDIHHGDGVEEAFYTTDRVMTVSFHKYGEYFPGTGDLRDIGAGKGKYYAVNYPLRDGIDDESYEAIFKPVMSKVMEMFQPSAVVLQCGSDSLSGDRLGCFNLTIKGHAKCVEFVKSFNLPMLMLGGGGYTIRNVARCWTYETAVALDTEIPNELPYNDYFEYFGPDFKLHISPSNMTNQNTNEYLEKIKQRLFENLRMLPHAPGVQMQAIPEDAIPEESGDEDEEDPDKRISICSSDKRIACEEEFSDSDEEGEGGRKNSSNFKKAKRVKTEDEKEKDPEEKKEVTEEEKTKEEKQEAKGVKEEVKLA.

Residues 9-321 (RKVCYYYDGD…WTYETAVALD (313 aa)) are histone deacetylase. 1D-myo-inositol 1,4,5,6-tetrakisphosphate contacts are provided by Gly27 and Lys31. Lys74 carries the post-translational modification N6-acetyllysine; alternate. Lys74 participates in a covalent cross-link: Glycyl lysine isopeptide (Lys-Gly) (interchain with G-Cter in SUMO2); alternate. Residue His141 is part of the active site. Residues Asp176 and His178 each coordinate Zn(2+). Lys220 carries the post-translational modification N6-acetyllysine. At Cys261 the chain carries S-nitrosocysteine. Asp264 serves as a coordination point for Zn(2+). Arg270 provides a ligand contact to 1D-myo-inositol 1,4,5,6-tetrakisphosphate. An S-nitrosocysteine modification is found at Cys273. Acidic residues predominate over residues 390-400 (PEESGDEDEED). The tract at residues 390 to 482 (PEESGDEDEE…KGVKEEVKLA (93 aa)) is disordered. Phosphoserine occurs at positions 393, 406, 409, 421, and 423. Over residues 401-416 (PDKRISICSSDKRIAC) the composition is skewed to basic and acidic residues. The span at 417–427 (EEEFSDSDEEG) shows a compositional bias: acidic residues. At Lys432 the chain carries N6-methylated lysine; by EHMT2. Lys438 participates in a covalent cross-link: Glycyl lysine isopeptide (Lys-Gly) (interchain with G-Cter in SUMO2). Residues 443–482 (VKTEDEKEKDPEEKKEVTEEEKTKEEKQEAKGVKEEVKLA) are compositionally biased toward basic and acidic residues. A Glycyl lysine isopeptide (Lys-Gly) (interchain with G-Cter in SUMO2); alternate cross-link involves residue Lys444. Lys444 participates in a covalent cross-link: Glycyl lysine isopeptide (Lys-Gly) (interchain with G-Cter in SUMO); alternate. Residues Lys456, Lys457, and Lys473 each participate in a glycyl lysine isopeptide (Lys-Gly) (interchain with G-Cter in SUMO2) cross-link. Lys476 participates in a covalent cross-link: Glycyl lysine isopeptide (Lys-Gly) (interchain with G-Cter in SUMO2); alternate. A Glycyl lysine isopeptide (Lys-Gly) (interchain with G-Cter in SUMO); alternate cross-link involves residue Lys476. Lys480 participates in a covalent cross-link: Glycyl lysine isopeptide (Lys-Gly) (interchain with G-Cter in SUMO2).

The protein belongs to the histone deacetylase family. HD type 1 subfamily. Part of the core histone deacetylase (HDAC) complex composed of HDAC1, HDAC2, RBBP4 and RBBP7, the core complex associates with SIN3, SAP18 and SAP30 to form the SIN3 HDAC complex. Component of the nucleosome remodeling and deacetylase (NuRD) repressor complex, composed of core proteins MTA1, MTA2, MTA3, RBBP4, RBBP7, HDAC1, HDAC2, MBD2, MBD3, and peripherally associated proteins CDK2AP1, CDK2AP2, GATAD2A, GATAD2B, CHD3, CHD4 and CHD5. The exact stoichiometry of the NuRD complex is unknown, and some subunits such as MBD2 and MBD3, GATAD2A and GATAD2B, and CHD3, CHD4 and CHD5 define mutually exclusive NuRD complexes. Component of a BHC histone deacetylase complex that contains HDAC1, HDAC2, HMG20B/BRAF35, KDM1A, RCOR1/CoREST and PHF21A/BHC80. The BHC complex may also contain ZMYM2, ZNF217, ZMYM3, GSE1 and GTF2I. Component of a mSin3A corepressor complex that contains SIN3A, SAP130, SUDS3/SAP45, ARID4B/SAP180, HDAC1 and HDAC2. Found in a trimeric complex with APBB1 and TSHZ3; the interaction between HDAC1 and APBB1 is mediated by TSHZ3. Forms a complex comprising APPL1, RUVBL2, APPL2, CTNNB1 and HDAC2. Component of a RCOR/GFI/KDM1A/HDAC complex. Part of a complex composed of TRIM28, HDAC1, HDAC2 and EHMT2. Part of a complex containing at least CDYL, MIER1, MIER2, HDAC1 and HDAC2. The large PER complex involved in the histone deacetylation is composed of at least HDAC1, PER2, SFPQ and SIN3A. Associates with the 9-1-1 complex; interacts with HUS1. Found in a complex with DNMT3A and HDAC7. Found in a complex with YY1, SIN3A and GON4L. Identified in a histone deacetylase complex that contains DNTTIP1, HDAC1 and MIDEAS; this complex assembles into a tetramer that contains four copies of each protein chain. Found in a complex composed of at least SINHCAF, SIN3A, HDAC1, SAP30, RBBP4, OGT and TET1. Component of the SIN3B complex, which includes SIN3B, HDAC1, PHF12 and MORF4L1. Interacts with GFI1; the interaction is direct. Interacts directly with GFI1B. Interacts with TSHZ3 (via N-terminus); the interaction is direct. Interacts with APEX1; the interaction is not dependent on the acetylated status of APEX1. Interacts with BANP. Interacts with BAZ2A/TIP5. Interacts with BCL6. Interacts with BCOR. Interacts with BHLHE40/DEC1. Interacts with BRCC3; this interaction is enhanced in the presence of PWWP2B. Interacts with BRMS1. Interacts with BRMS1L. Interacts with C10orf90/FATS (via its N-terminal); the interaction prevents binding of HDAC1 to CDKN1A/p21 and facilitates the acetylation and stabilization of CDKN1A/p21. Interacts with CBFA2T3. Interacts with CCAR2. Interacts with CDK2AP1. Interacts with CHD3. Interacts with CHD4. Interacts with CHFR. Interacts with CIART. Interacts with CDKN1A/p21. Interacts with CDK5 complexed to CDK5R1 (p25). Interacts with CRY1. Interacts with DAXX. Interacts with DDIT3/CHOP. Interacts with DDX5. Interacts with DHX36; this interaction occurs in a RNA-dependent manner. Interacts with DNMT1. Interacts with DNTTIP1. Interacts with E4F1. Interacts with EP300. Interacts with ERCC6. Interacts with GATAD2A. Interacts with HCFC1. Interacts with HDAC9. Interacts with HUS1. Interacts with INSM1. Interacts with KDM4A. Interacts with KDM5A; this interaction impairs histone deacetylation. Interacts with KDM5B. Interacts with KLF1. Interacts with MBD3L2. Interacts with MIER1. Interacts with NFE4. Interacts with NR4A2/NURR1. Interacts with NR1D2 (via C-terminus). Interacts with NRIP1. Interacts with NSD2. Interacts with PACS2. Interacts with PHB2. Interacts with PPHLN1. Interacts with PRDM6. Interacts with PRDM16. Interacts with PWWP2A in a MTA1-dependent manner. Interacts with PWWP2B. Interacts with RB1. Interacts with RERE. Interacts with SANBR (via the BTB domain). Interacts with SAMSN1. Interacts with SAP30L. Interacts with SETDB1. Interacts with SIN3A. Interacts with SMAD3. Interacts with SMAD4; positively regulated by ZBTB7A. Interacts with SMARCAD1. Interacts with SMARCA4/BRG1. Interacts with SMYD2. Interacts with SMYD4 (via MYND-type zinc finger). Interacts with SP1; the interaction deacetylates SP1 and regulates its transcriptional activity. Interacts with SP3; the interaction deacetylates SP3 and regulates its transcriptional activity. In vitro, C(18) ceramides increase this interaction and the subsequent SP3 deacetylation and SP3-mediated repression of the TERT promoter. Interacts with SPEN/MINT. Interacts with SPHK2. Interacts with SUV39H1. Interacts with TGIF. Interacts with TGIF2. Interacts with TRAF6. Interacts with TRIM28; the interaction recruits HDAC1 to E2F1 and inhibits its acetylation. Interacts with TSC22D3 isoform 1; this interaction affects HDAC1 activity on MYOG promoter and thus inhibits MYOD1 transcriptional activity. Interacts with UHRF1. Interacts with UHRF2. Interacts with ZBTB7A. Interacts with ZMYND8. Interacts with ZMYND15. Interacts with ZNF431. Interacts with ZNF516; this interaction is enhanced in the presence of PWWP2B. Interacts with ZNF541. Interacts with ZNF638. Interacts with ZNHIT1. Interacts with the non-histone region of MACROH2A1. Identified in a complex with HDAC2, KCTD19, DNTTIP1 and ZNF541. Interacts with MSX3. Interacts with VRK1. Requires Zn(2+) as cofactor. Sumoylated on Lys-444 and Lys-476; which promotes enzymatic activity. Desumoylated by SENP1. In terms of processing, phosphorylation on Ser-421 and Ser-423 promotes enzymatic activity and interactions with NuRD and SIN3 complexes. Phosphorylated by CDK5. Post-translationally, ubiquitinated by CHFR and KCTD11, leading to its degradation by the proteasome.

The protein resides in the nucleus. The catalysed reaction is N(6)-acetyl-L-lysyl-[histone] + H2O = L-lysyl-[histone] + acetate. It catalyses the reaction N(6)-acetyl-L-lysyl-[protein] + H2O = L-lysyl-[protein] + acetate. The enzyme catalyses N(6)-(2E)-butenoyl-L-lysyl-[protein] + H2O = (2E)-2-butenoate + L-lysyl-[protein]. It carries out the reaction N(6)-[(S)-lactoyl]-L-lysyl-[protein] + H2O = (S)-lactate + L-lysyl-[protein]. Its activity is regulated as follows. Inositol tetraphosphate (1D-myo-inositol 1,4,5,6-tetrakisphosphate) may act as an intermolecular glue between HDAC1 and N-Cor repressor complex components. Its function is as follows. Histone deacetylase that catalyzes the deacetylation of lysine residues on the N-terminal part of the core histones (H2A, H2B, H3 and H4). Histone deacetylation gives a tag for epigenetic repression and plays an important role in transcriptional regulation, cell cycle progression and developmental events. Histone deacetylases act via the formation of large multiprotein complexes. Acts as a component of the histone deacetylase NuRD complex which participates in the remodeling of chromatin. As part of the SIN3B complex is recruited downstream of the constitutively active genes transcriptional start sites through interaction with histones and mitigates histone acetylation and RNA polymerase II progression within transcribed regions contributing to the regulation of transcription. Also functions as a deacetylase for non-histone targets, such as NR1D2, RELA, SP1, SP3, STAT3 and TSHZ3. Deacetylates SP proteins, SP1 and SP3, and regulates their function. Component of the BRG1-RB1-HDAC1 complex, which negatively regulates the CREST-mediated transcription in resting neurons. Upon calcium stimulation, HDAC1 is released from the complex and CREBBP is recruited, which facilitates transcriptional activation. Deacetylates TSHZ3 and regulates its transcriptional repressor activity. Deacetylates 'Lys-310' in RELA and thereby inhibits the transcriptional activity of NF-kappa-B. Deacetylates NR1D2 and abrogates the effect of KAT5-mediated relieving of NR1D2 transcription repression activity. Component of a RCOR/GFI/KDM1A/HDAC complex that suppresses, via histone deacetylase (HDAC) recruitment, a number of genes implicated in multilineage blood cell development. Involved in CIART-mediated transcriptional repression of the circadian transcriptional activator: CLOCK-BMAL1 heterodimer. Required for the transcriptional repression of circadian target genes, such as PER1, mediated by the large PER complex or CRY1 through histone deacetylation. In addition to protein deacetylase activity, also has protein-lysine deacylase activity: acts as a protein decrotonylase and delactylase by mediating decrotonylation ((2E)-butenoyl) and delactylation (lactoyl) of histones, respectively. The protein is Histone deacetylase 1 (HDAC1) of Bos taurus (Bovine).